Reading from the N-terminus, the 53-residue chain is ATP synthase protein 8 (53 aa).

Residues 4 to 24 (MAPISWLLLFIVFSITFILFC) form a helical membrane-spanning segment.

This sequence belongs to the ATPase protein 8 family. As to quaternary structure, F-type ATPases have 2 components, CF(1) - the catalytic core - and CF(0) - the membrane proton channel.

The protein localises to the mitochondrion membrane. Its function is as follows. Mitochondrial membrane ATP synthase (F(1)F(0) ATP synthase or Complex V) produces ATP from ADP in the presence of a proton gradient across the membrane which is generated by electron transport complexes of the respiratory chain. F-type ATPases consist of two structural domains, F(1) - containing the extramembraneous catalytic core and F(0) - containing the membrane proton channel, linked together by a central stalk and a peripheral stalk. During catalysis, ATP synthesis in the catalytic domain of F(1) is coupled via a rotary mechanism of the central stalk subunits to proton translocation. Part of the complex F(0) domain. Minor subunit located with subunit a in the membrane. In Drosophila yakuba (Fruit fly), this protein is ATP synthase protein 8 (mt:ATPase8).